Consider the following 82-residue polypeptide: Progonadoliberin-3 (82 aa).

An N-terminal signal peptide occupies residues 1–23 (MDLSNRTVVQVVVLALVAQVTLS). Position 24 is a pyrrolidone carboxylic acid (Gln24). Gly33 carries the post-translational modification Glycine amide.

This sequence belongs to the GnRH family. In terms of tissue distribution, brain.

The protein localises to the secreted. In terms of biological role, stimulates the secretion of gonadotropins. The sequence is that of Progonadoliberin-3 (gnrh3) from Oncorhynchus nerka (Sockeye salmon).